The sequence spans 177 residues: Thaumatin-like protein (177 aa).

The first 26 residues, 1–26 (MASPATSSAVLVVVLVATLAAGGANA), serve as a signal peptide directing secretion.

It belongs to the thaumatin family.

It localises to the secreted. This Oryza sativa subsp. japonica (Rice) protein is Thaumatin-like protein.